A 200-amino-acid chain; its full sequence is UPF0301 protein BOV_0485 (200 aa).

The protein belongs to the UPF0301 (AlgH) family.

The polypeptide is UPF0301 protein BOV_0485 (Brucella ovis (strain ATCC 25840 / 63/290 / NCTC 10512)).